The chain runs to 63 residues: Small ribosomal subunit protein bS21 (63 aa).

Basic and acidic residues predominate over residues 40 to 52 (KPSVKRKLKSEAA). The segment at 40–63 (KPSVKRKLKSEAARKRKNKRGRRY) is disordered. Positions 53–63 (RKRKNKRGRRY) are enriched in basic residues.

Belongs to the bacterial ribosomal protein bS21 family.

The polypeptide is Small ribosomal subunit protein bS21 (Limosilactobacillus reuteri (strain DSM 20016) (Lactobacillus reuteri)).